The following is a 320-amino-acid chain: Mitochondrial oxaloacetate transport protein (320 aa).

Solcar repeat units lie at residues 21–114 (LGPV…IRRT), 126–218 (NKLA…AKRM), and 227–313 (EGMI…TNKL). Transmembrane regions (helical) follow at residues 26–47 (GFLS…FEVI), 91–111 (GTAY…YEPI), 129–145 (AINV…GALF), 197–217 (AILR…WAKR), 233–253 (LTAS…FDTV), and 285–306 (LYKG…CLTF).

It belongs to the mitochondrial carrier (TC 2.A.29) family.

It is found in the mitochondrion inner membrane. It carries out the reaction a dicarboxylate(in) + sulfate(out) = a dicarboxylate(out) + sulfate(in). It catalyses the reaction (2S)-2-isopropylmalate(in) + sulfate(out) = (2S)-2-isopropylmalate(out) + sulfate(in). The enzyme catalyses (2R,3S)-3-isopropylmalate(in) + sulfate(out) = (2R,3S)-3-isopropylmalate(out) + sulfate(in). The catalysed reaction is malonate(in) + sulfate(out) = malonate(out) + sulfate(in). It carries out the reaction oxaloacetate(in) + sulfate(out) = oxaloacetate(out) + sulfate(in). It catalyses the reaction thiosulfate(in) + sulfate(out) = thiosulfate(out) + sulfate(in). Its function is as follows. Antiporter that exchanges dicarboxylates and sulfur oxoanions across the inner membrane of mitochondria. Exports alpha-isopropylmalate from mitochondrial matrix to the cytosol, where it serves as a precursor for leucine biosynthesis. In Schizosaccharomyces pombe (strain 972 / ATCC 24843) (Fission yeast), this protein is Mitochondrial oxaloacetate transport protein (oac1).